A 1708-amino-acid chain; its full sequence is 187-kDa microtubule-associated protein AIR9 (1708 aa).

Over residues Ser67–Gly93 the composition is skewed to polar residues. Residues Ser67–Ser255 are disordered. Basic and acidic residues predominate over residues Asp110 to Lys121. Residues Ser122–Lys134 are compositionally biased toward low complexity. Residues Gly149–Glu165 are compositionally biased toward polar residues. Residues Ser173 to Pro234 are compositionally biased toward low complexity. LRR repeat units lie at residues Ala267–Leu290, Ser291–Arg315, Val316–Glu335, Cys337–Leu359, Pro360–Arg382, Gln384–Leu402, and Pro403–Ser425. A9 repeat units lie at residues Pro489 to Ser584, Leu601 to Tyr682, Ile698 to Ser777, Ile793 to Leu878, Ile895 to Met977, Val994 to Glu1073, Phe1090 to Arg1167, Ile1183 to Ile1272, Val1287 to Glu1365, Phe1382 to Glu1473, and Ile1489 to Ser1569.

In terms of assembly, interacts with KCBP. In terms of tissue distribution, strongly expressed in dividing cells, like the meristemic region of the root tip.

It is found in the cytoplasm. The protein resides in the cell cortex. It localises to the cytoskeleton. Its subcellular location is the phragmoplast. In terms of biological role, microtubule-associated protein that may be involved in the maturation of cell plates and proper insertion of cross-walls after cytokinesis. The sequence is that of 187-kDa microtubule-associated protein AIR9 from Arabidopsis thaliana (Mouse-ear cress).